The following is a 478-amino-acid chain: Membrane-bound lytic murein transglycosylase F (478 aa).

The signal sequence occupies residues 1-22 (MTRFLFAIILGFLLTACQQVTV). The interval 23–257 (EETEYVPHKL…HLNEKYFGHV (235 aa)) is non-LT domain. The LT domain stretch occupies residues 258–478 (KRFDYIDTRA…PGTLSPDKPK (221 aa)). Residue glutamate 302 is part of the active site. A disordered region spans residues 446–478 (SKQQNSDEEEPSDLASEDGPAPVPGTLSPDKPK). Residues 451-461 (SDEEEPSDLAS) are compositionally biased toward acidic residues.

In the N-terminal section; belongs to the bacterial solute-binding protein 3 family. It in the C-terminal section; belongs to the transglycosylase Slt family.

It is found in the cell outer membrane. The catalysed reaction is Exolytic cleavage of the (1-&gt;4)-beta-glycosidic linkage between N-acetylmuramic acid (MurNAc) and N-acetylglucosamine (GlcNAc) residues in peptidoglycan, from either the reducing or the non-reducing ends of the peptidoglycan chains, with concomitant formation of a 1,6-anhydrobond in the MurNAc residue.. In terms of biological role, murein-degrading enzyme that degrades murein glycan strands and insoluble, high-molecular weight murein sacculi, with the concomitant formation of a 1,6-anhydromuramoyl product. Lytic transglycosylases (LTs) play an integral role in the metabolism of the peptidoglycan (PG) sacculus. Their lytic action creates space within the PG sacculus to allow for its expansion as well as for the insertion of various structures such as secretion systems and flagella. The protein is Membrane-bound lytic murein transglycosylase F of Shewanella sp. (strain MR-4).